A 191-amino-acid polypeptide reads, in one-letter code: Large ribosomal subunit protein uL6 (191 aa).

This sequence belongs to the universal ribosomal protein uL6 family. In terms of assembly, component of the large ribosomal subunit. Mature ribosomes consist of a small (40S) and a large (60S) subunit. The 40S subunit contains about 32 different proteins and 1 molecule of RNA (18S). The 60S subunit contains 45 different proteins and 3 molecules of RNA (25S, 5.8S and 5S).

The protein localises to the cytoplasm. Its function is as follows. Component of the ribosome, a large ribonucleoprotein complex responsible for the synthesis of proteins in the cell. The small ribosomal subunit (SSU) binds messenger RNAs (mRNAs) and translates the encoded message by selecting cognate aminoacyl-transfer RNA (tRNA) molecules. The large subunit (LSU) contains the ribosomal catalytic site termed the peptidyl transferase center (PTC), which catalyzes the formation of peptide bonds, thereby polymerizing the amino acids delivered by tRNAs into a polypeptide chain. The nascent polypeptides leave the ribosome through a tunnel in the LSU and interact with protein factors that function in enzymatic processing, targeting, and the membrane insertion of nascent chains at the exit of the ribosomal tunnel. This is Large ribosomal subunit protein uL6 from Candida albicans (strain SC5314 / ATCC MYA-2876) (Yeast).